A 185-amino-acid polypeptide reads, in one-letter code: Peptidoglycan-recognition protein SC1a (185 aa).

A signal peptide spans 1-21 (MVSKVALLLAVLVCSQYMAQG). Residues 46–170 (SYAIIHHTAG…RQVSATECPG (125 aa)) enclose the N-acetylmuramoyl-L-alanine amidase domain. His51 contributes to the Zn(2+) binding site. Cysteines 58 and 64 form a disulfide. 2 residues coordinate Zn(2+): His160 and Cys168.

The protein belongs to the N-acetylmuramoyl-L-alanine amidase 2 family. The cofactor is Zn(2+).

Its subcellular location is the secreted. It carries out the reaction Hydrolyzes the link between N-acetylmuramoyl residues and L-amino acid residues in certain cell-wall glycopeptides.. In terms of biological role, N-acetylmuramyl-L-alanine amidase involved in innate immunity by degrading bacterial peptidoglycans (PGN). Plays a scavenger role by digesting biologically active PGN into biologically inactive fragments. Has no direct bacteriolytic activity. This chain is Peptidoglycan-recognition protein SC1a, found in Drosophila melanogaster (Fruit fly).